A 2157-amino-acid chain; its full sequence is DExH-box ATP-dependent RNA helicase DExH14 (2157 aa).

Residues 374 to 394 (KAASNTQSRMPTYGTQVTVQT) form a disordered region. Positions 375 to 394 (AASNTQSRMPTYGTQVTVQT) are enriched in polar residues. Residues 517 to 699 (QTVYHTNENI…FLRVNTDTGL (183 aa)) form the Helicase ATP-binding 1 domain. Residue 530 to 537 (APTGAGKT) participates in ATP binding. The DEVH box motif lies at 641–644 (DEVH). Positions 734 to 932 (CYKKVVDSIK…SLKDNLNAEV (199 aa)) constitute a Helicase C-terminal 1 domain. The SEC63 1 domain maps to 1008–1315 (CTELGRVASH…LHAETYFTIS (308 aa)). The Helicase ATP-binding 2 domain maps to 1365–1540 (HVLYHTDNNV…WLGVGEIGLF (176 aa)). 1378–1385 (APTGSGKT) contacts ATP. A DEIH box motif is present at residues 1482-1485 (DEIH). Residues 1571 to 1780 (NKPAYAAICT…GTIGNKEDAV (210 aa)) form the Helicase C-terminal 2 domain. The SEC63 2 domain maps to 1839–2150 (PTMLGTIASQ…YLGFEQEHSI (312 aa)).

It belongs to the DExH box helicase family.

It localises to the nucleus. It carries out the reaction ATP + H2O = ADP + phosphate + H(+). Its function is as follows. RNA helicase that plays an essential role in pre-mRNA splicing as component of the U5 snRNP and U4/U6-U5 tri-snRNP complexes. Involved in spliceosome assembly, activation and disassembly. The protein is DExH-box ATP-dependent RNA helicase DExH14 of Arabidopsis thaliana (Mouse-ear cress).